The sequence spans 202 residues: Glycerol-3-phosphate acyltransferase (202 aa).

Helical transmembrane passes span 11–31 (ALIAALVLGYACGAIPFGLIL), 87–107 (PALAAGLGAFLGHLFPVWLGF), 116–136 (FIGVLLALSPLTLAAFAAIWL), and 158–178 (VILWALGHGGVAALFLVLAAL).

This sequence belongs to the PlsY family. Probably interacts with PlsX.

It localises to the cell inner membrane. The enzyme catalyses an acyl phosphate + sn-glycerol 3-phosphate = a 1-acyl-sn-glycero-3-phosphate + phosphate. Its pathway is lipid metabolism; phospholipid metabolism. Its function is as follows. Catalyzes the transfer of an acyl group from acyl-phosphate (acyl-PO(4)) to glycerol-3-phosphate (G3P) to form lysophosphatidic acid (LPA). This enzyme utilizes acyl-phosphate as fatty acyl donor, but not acyl-CoA or acyl-ACP. The protein is Glycerol-3-phosphate acyltransferase of Methylorubrum populi (strain ATCC BAA-705 / NCIMB 13946 / BJ001) (Methylobacterium populi).